A 338-amino-acid chain; its full sequence is tRNA N6-adenosine threonylcarbamoyltransferase (338 aa).

Residues H111 and H115 each contribute to the Fe cation site. Residues 134 to 138, D167, G180, and N272 each bind substrate; that span reads LVSGG. Residue D300 participates in Fe cation binding.

It belongs to the KAE1 / TsaD family. Requires Fe(2+) as cofactor.

It is found in the cytoplasm. It carries out the reaction L-threonylcarbamoyladenylate + adenosine(37) in tRNA = N(6)-L-threonylcarbamoyladenosine(37) in tRNA + AMP + H(+). Required for the formation of a threonylcarbamoyl group on adenosine at position 37 (t(6)A37) in tRNAs that read codons beginning with adenine. Is involved in the transfer of the threonylcarbamoyl moiety of threonylcarbamoyl-AMP (TC-AMP) to the N6 group of A37, together with TsaE and TsaB. TsaD likely plays a direct catalytic role in this reaction. The chain is tRNA N6-adenosine threonylcarbamoyltransferase from Vibrio parahaemolyticus serotype O3:K6 (strain RIMD 2210633).